The following is a 279-amino-acid chain: tRNA pseudouridine synthase B (279 aa).

Asp38 functions as the Nucleophile in the catalytic mechanism.

Belongs to the pseudouridine synthase TruB family. Type 1 subfamily.

The catalysed reaction is uridine(55) in tRNA = pseudouridine(55) in tRNA. Responsible for synthesis of pseudouridine from uracil-55 in the psi GC loop of transfer RNAs. The sequence is that of tRNA pseudouridine synthase B from Acholeplasma laidlawii (strain PG-8A).